The chain runs to 202 residues: LexA repressor (202 aa).

The segment at residues 28-47 (IREIGDQFGITAKGAYDHLK) is a DNA-binding region (H-T-H motif). Catalysis depends on for autocatalytic cleavage activity residues S126 and K163.

The protein belongs to the peptidase S24 family. As to quaternary structure, homodimer.

It catalyses the reaction Hydrolysis of Ala-|-Gly bond in repressor LexA.. Represses a number of genes involved in the response to DNA damage (SOS response), including recA and lexA. In the presence of single-stranded DNA, RecA interacts with LexA causing an autocatalytic cleavage which disrupts the DNA-binding part of LexA, leading to derepression of the SOS regulon and eventually DNA repair. The chain is LexA repressor from Leptospira biflexa serovar Patoc (strain Patoc 1 / Ames).